The following is an 89-amino-acid chain: Large ribosomal subunit protein eL34 (89 aa).

The tract at residues 1–22 is disordered; sequence MPAPRYKSGSSKKVYRKAPGNS.

Belongs to the eukaryotic ribosomal protein eL34 family.

This is Large ribosomal subunit protein eL34 from Methanococcus maripaludis (strain C5 / ATCC BAA-1333).